The chain runs to 166 residues: Small ribosomal subunit protein eS10 (166 aa).

A disordered region spans residues 95–166; that stretch reads RRQTRPETAR…FGRGRGQQPQ (72 aa). Positions 98–129 are enriched in basic and acidic residues; it reads TRPETARPRPKGLEGERPARLARGEGDRDAYR. The segment covering 143-154 has biased composition (low complexity); sequence AGAGAATEFQFR. The segment covering 155-166 has biased composition (gly residues); sequence GGFGRGRGQQPQ.

Belongs to the eukaryotic ribosomal protein eS10 family. As to quaternary structure, component of the small ribosomal subunit.

It localises to the cytoplasm. The protein resides in the nucleus. It is found in the nucleolus. Functionally, component of the 40S ribosomal subunit. The ribosome is a large ribonucleoprotein complex responsible for the synthesis of proteins in the cell. The polypeptide is Small ribosomal subunit protein eS10 (rps10) (Ictalurus punctatus (Channel catfish)).